Here is a 154-residue protein sequence, read N- to C-terminus: Putative pre-16S rRNA nuclease (154 aa).

It belongs to the YqgF nuclease family.

It is found in the cytoplasm. In terms of biological role, could be a nuclease involved in processing of the 5'-end of pre-16S rRNA. In Rickettsia canadensis (strain McKiel), this protein is Putative pre-16S rRNA nuclease.